We begin with the raw amino-acid sequence, 807 residues long: Putative histidine biosynthesis bifunctional protein HisCD (807 aa).

Positions 1-440 are histidinol dehydrogenase; it reads MTDHFDTLIR…ALNIAGQGVN (440 aa). Zn(2+) contacts are provided by glutamine 261 and histidine 264. Residues glutamate 328 and histidine 329 contribute to the active site. Residues aspartate 362 and histidine 421 each coordinate Zn(2+). Residues 441–807 form a histidinol-phosphate aminotransferase region; the sequence is MNNIFDANLL…VNEQPKEIAN (367 aa). Lysine 655 is modified (N6-(pyridoxal phosphate)lysine).

The protein in the N-terminal section; belongs to the histidinol dehydrogenase family. In the C-terminal section; belongs to the class-II pyridoxal-phosphate-dependent aminotransferase family. Histidinol-phosphate aminotransferase subfamily. As to quaternary structure, homodimer. Zn(2+) serves as cofactor. Requires pyridoxal 5'-phosphate as cofactor.

The catalysed reaction is L-histidinol phosphate + 2-oxoglutarate = 3-(imidazol-4-yl)-2-oxopropyl phosphate + L-glutamate. The enzyme catalyses L-histidinol + 2 NAD(+) + H2O = L-histidine + 2 NADH + 3 H(+). It functions in the pathway amino-acid biosynthesis; L-histidine biosynthesis; L-histidine from 5-phospho-alpha-D-ribose 1-diphosphate: step 7/9. The protein operates within amino-acid biosynthesis; L-histidine biosynthesis; L-histidine from 5-phospho-alpha-D-ribose 1-diphosphate: step 9/9. In terms of biological role, catalyzes the sequential NAD-dependent oxidations of L-histidinol to L-histidinaldehyde and then to L-histidine. This chain is Putative histidine biosynthesis bifunctional protein HisCD (hisCD), found in Photorhabdus laumondii subsp. laumondii (strain DSM 15139 / CIP 105565 / TT01) (Photorhabdus luminescens subsp. laumondii).